Reading from the N-terminus, the 423-residue chain is MTNEEPLPKKVRLSESDMKTLTREELCTRWKQHETYVQMLEAKYADLNSNDVTGLKESEEKLKQQQQESARRENILVMRLATKEQEMQECTTQIQYLKQVQQPSAAQLRSSMVDPAINLFFLKMKAELEQTKDKLEQAQNELSAWKFTPDSQTGKKLMAKCRMLIQENQELGRQLSQGRIAQLEAELALQKKYSEELKSSQDELNDFIIQLDEEVEGMQSTILVLQQQLRETRQQLSQMNQTQGTSSGAGPSRTSPSTASEPSTQSEPANASSSNVGKDCGRVSNGPSNGNSSQRGASGSSLYREASSADEDYPPSPSVSSPTHDGISKLSNHSEDAVSQRGGEGYVTQLSAGYESVDSPTGSETSVTQHSNDTDSNADSHEAAAVPKGSRTAGTRHSTQNGLDSSAAAVATNTSNASAGSVL.

The interval 234–423 (QQLSQMNQTQ…TSNASAGSVL (190 aa)) is disordered. 4 stretches are compositionally biased toward polar residues: residues 239–276 (MNQT…SSNV), 285–301 (NGPS…SGSS), 358–377 (DSPT…TDSN), and 392–404 (TAGT…NGLD). Positions 405–423 (SSAAAVATNTSNASAGSVL) are enriched in low complexity.

The protein belongs to the fl(2)d family. In terms of assembly, component of the WMM complex, a N6-methyltransferase complex composed of a catalytic subcomplex, named MAC, and of an associated subcomplex, named MACOM. Component of the MACOM subcomplex.

The protein resides in the nucleus speckle. The protein localises to the nucleus. Its subcellular location is the nucleoplasm. Functionally, associated component of the WMM complex, a complex that mediates N6-methyladenosine (m6A) methylation of RNAs, a modification that plays a role in the efficiency of mRNA splicing and RNA processing. The chain is Pre-mRNA-splicing regulator WTAP from Danio rerio (Zebrafish).